We begin with the raw amino-acid sequence, 252 residues long: Imidazole glycerol phosphate synthase subunit HisF (252 aa).

Residues Asp11 and Asp130 contribute to the active site.

It belongs to the HisA/HisF family. As to quaternary structure, heterodimer of HisH and HisF.

The protein resides in the cytoplasm. It catalyses the reaction 5-[(5-phospho-1-deoxy-D-ribulos-1-ylimino)methylamino]-1-(5-phospho-beta-D-ribosyl)imidazole-4-carboxamide + L-glutamine = D-erythro-1-(imidazol-4-yl)glycerol 3-phosphate + 5-amino-1-(5-phospho-beta-D-ribosyl)imidazole-4-carboxamide + L-glutamate + H(+). It functions in the pathway amino-acid biosynthesis; L-histidine biosynthesis; L-histidine from 5-phospho-alpha-D-ribose 1-diphosphate: step 5/9. IGPS catalyzes the conversion of PRFAR and glutamine to IGP, AICAR and glutamate. The HisF subunit catalyzes the cyclization activity that produces IGP and AICAR from PRFAR using the ammonia provided by the HisH subunit. The sequence is that of Imidazole glycerol phosphate synthase subunit HisF from Staphylococcus aureus (strain bovine RF122 / ET3-1).